A 513-amino-acid polypeptide reads, in one-letter code: Probable DNA ligase (513 aa).

Residue Glu-213 participates in ATP binding. Lys-215 (N6-AMP-lysine intermediate) is an active-site residue. Positions 220, 235, 264, 304, 376, and 382 each coordinate ATP.

It belongs to the ATP-dependent DNA ligase family. Mg(2+) is required as a cofactor.

It catalyses the reaction ATP + (deoxyribonucleotide)n-3'-hydroxyl + 5'-phospho-(deoxyribonucleotide)m = (deoxyribonucleotide)n+m + AMP + diphosphate.. Functionally, DNA ligase that seals nicks in double-stranded DNA during DNA replication, DNA recombination and DNA repair. The chain is Probable DNA ligase from Anaeromyxobacter dehalogenans (strain 2CP-C).